The chain runs to 104 residues: Transcription elongation factor A protein-like 9 (104 aa).

The disordered stretch occupies residues 1-48 (MKPCQKMEGNLEKEDEPKPEEEPKPEEKPEEGQEPEEEEKSEETFRER). A compositionally biased stretch (basic and acidic residues) spans 9 to 31 (GNLEKEDEPKPEEEPKPEEKPEE). Residues 32 to 41 (GQEPEEEEKS) show a composition bias toward acidic residues.

Belongs to the TFS-II family. TFA subfamily.

The protein resides in the nucleus. Its function is as follows. May be involved in transcriptional regulation. The protein is Transcription elongation factor A protein-like 9 (Tceal9) of Mus musculus (Mouse).